The chain runs to 330 residues: MIMKLMRTVSVAVTGGTGQIAYSFLFALAHGDVFGSDCSIDLRVYDLPGLERALSGVRMELDDCAYPLLQSLRVTTSLEDACDGIDAAFLIGAAPRGPGMERSDLLKRNGEIFSLQGSVLNVCAKRDAKIFVVGNPVNTNCWIAMNKAPKLNRRNFHSMLRLDQNRMHTMLAHRAEVPLDEVTNVVVWGNHSAKQVPDFTQALISGKPAVEVISDRDWLENIMFPSIQNRGSAVIEARGKSSAGSAARALAEAARSIFLPKDGEWFSSGVCSDYNPYGIPDDLIFGFPCRMLPSGDYEIVPGLPWDAFIKNKIQISLDEISQEKASVSLL.

Residue 15 to 21 coordinates NAD(+); it reads GGTGQIA. Substrate contacts are provided by Arg96 and Arg102. NAD(+) contacts are provided by residues Asn109, Gln116, and 133–135; that span reads VGN. Residues Asn135 and Arg166 each coordinate substrate. His191 (proton acceptor) is an active-site residue.

This sequence belongs to the LDH/MDH superfamily. MDH type 2 family.

It catalyses the reaction (S)-malate + NAD(+) = oxaloacetate + NADH + H(+). Functionally, catalyzes the reversible oxidation of malate to oxaloacetate. This chain is Malate dehydrogenase, found in Chlamydia caviae (strain ATCC VR-813 / DSM 19441 / 03DC25 / GPIC) (Chlamydophila caviae).